Here is a 276-residue protein sequence, read N- to C-terminus: Urease accessory protein UreD (276 aa).

The protein belongs to the UreD family. As to quaternary structure, ureD, UreF and UreG form a complex that acts as a GTP-hydrolysis-dependent molecular chaperone, activating the urease apoprotein by helping to assemble the nickel containing metallocenter of UreC. The UreE protein probably delivers the nickel.

It localises to the cytoplasm. In terms of biological role, required for maturation of urease via the functional incorporation of the urease nickel metallocenter. This Verminephrobacter eiseniae (strain EF01-2) protein is Urease accessory protein UreD.